A 150-amino-acid chain; its full sequence is Dual specificity protein phosphatase 23 (150 aa).

The Tyrosine-protein phosphatase domain maps to Asn-7 to Lys-150. The Phosphocysteine intermediate role is filled by Cys-95.

The protein belongs to the protein-tyrosine phosphatase family. Non-receptor class dual specificity subfamily. Widely expressed.

It localises to the cytoplasm. The protein resides in the cytosol. The protein localises to the nucleus. It carries out the reaction O-phospho-L-tyrosyl-[protein] + H2O = L-tyrosyl-[protein] + phosphate. It catalyses the reaction O-phospho-L-seryl-[protein] + H2O = L-seryl-[protein] + phosphate. The catalysed reaction is O-phospho-L-threonyl-[protein] + H2O = L-threonyl-[protein] + phosphate. Protein phosphatase that mediates dephosphorylation of proteins phosphorylated on Tyr and Ser/Thr residues. In vitro, it can dephosphorylate p44-ERK1 (MAPK3) but not p54 SAPK-beta (MAPK10) in vitro. Able to enhance activation of JNK and p38 (MAPK14). The polypeptide is Dual specificity protein phosphatase 23 (Dusp23) (Mus musculus (Mouse)).